The following is an 863-amino-acid chain: Autotaxin (863 aa).

A signal peptide spans 1-27 (MARRSSFQSCQIISLFTFAVGVNICLG). A propeptide spans 28–35 (FTAHRIKR) (removed by furin). An N-linked (GlcNAc...) asparagine glycan is attached at asparagine 54. SMB domains are found at residues 55 to 98 (ISGS…LKTA) and 99 to 143 (RGWE…GESH). 10 cysteine pairs are disulfide-bonded: cysteine 59–cysteine 76, cysteine 63–cysteine 94, cysteine 74–cysteine 87, cysteine 80–cysteine 86, cysteine 103–cysteine 120, cysteine 108–cysteine 138, cysteine 118–cysteine 131, cysteine 124–cysteine 130, cysteine 149–cysteine 195, and cysteine 157–cysteine 351. Residues 127-129 (RGD) carry the Cell attachment site motif. The phosphodiesterase stretch occupies residues 145 to 502 (VDDDCEEIKA…STFKYKTKVP (358 aa)). Residues aspartate 172 and threonine 210 each coordinate Zn(2+). The active-site Nucleophile is the threonine 210. 1-(9Z-octadecenoyl)-sn-glycero-3-phosphate contacts are provided by threonine 210, asparagine 231, and aspartate 312. Residues threonine 210, asparagine 231, and aspartate 312 each contribute to the 1-hexadecanoyl-sn-glycero-3-phosphate site. Positions 210, 231, and 312 each coordinate 1-tetradecanoyl-sn-glycerol 3-phosphate. Residues aspartate 312, histidine 316, aspartate 359, and histidine 360 each coordinate Zn(2+). Disulfide bonds link cysteine 367–cysteine 469, cysteine 414–cysteine 806, cysteine 567–cysteine 667, cysteine 569–cysteine 652, and cysteine 775–cysteine 785. Asparagine 411 is a glycosylation site (N-linked (GlcNAc...) asparagine). Histidine 475 contributes to the Zn(2+) binding site. Histidine 475 contacts 1-(9Z-octadecenoyl)-sn-glycero-3-phosphate. 1-hexadecanoyl-sn-glycero-3-phosphate is bound at residue histidine 475. Position 475 (histidine 475) interacts with 1-tetradecanoyl-sn-glycerol 3-phosphate. Asparagine 525 carries N-linked (GlcNAc...) asparagine glycosylation. Residues 598–863 (LYGRPAVLYR…TYLHTYESEI (266 aa)) form a nuclease-like domain region. Positions 740, 742, 744, 746, and 748 each coordinate Ca(2+). Residue asparagine 807 is glycosylated (N-linked (GlcNAc...) asparagine). Residues 830–851 (IEHLTSLDFFRKTSRSYPEILT) form a required for secretion region.

The protein belongs to the nucleotide pyrophosphatase/phosphodiesterase family. The cofactor is Zn(2+). Requires Ca(2+) as cofactor. N-glycosylation, but not furin-cleavage, plays a critical role on secretion and on lysoPLD activity. Post-translationally, the interdomain disulfide bond between Cys-414 and Cys-806 is essential for catalytic activity. In terms of tissue distribution, detected in blood plasma (at protein level). Predominantly expressed in brain, placenta, ovary, and small intestine. Expressed in a number of carcinomas such as hepatocellular and prostate carcinoma, neuroblastoma and non-small-cell lung cancer. Expressed in body fluids such as plasma, cerebral spinal fluid (CSF), saliva, follicular and amniotic fluids. Not detected in leukocytes. Isoform 1 is more highly expressed in peripheral tissues than in the central nervous system (CNS). Adipocytes only express isoform 1. Isoform 3 is more highly expressed in the brain than in peripheral tissues.

The protein resides in the secreted. The enzyme catalyses a 1-O-alkyl-sn-glycero-3-phosphoethanolamine + H2O = a 1-O-alkyl-sn-glycero-3-phosphate + ethanolamine + H(+). It catalyses the reaction a 1-acyl-sn-glycero-3-phosphoethanolamine + H2O = a 1-acyl-sn-glycero-3-phosphate + ethanolamine + H(+). The catalysed reaction is 1-(9Z-octadecenoyl)-sn-glycero-3-phosphoethanolamine + H2O = 1-(9Z-octadecenoyl)-sn-glycero-3-phosphate + ethanolamine + H(+). It carries out the reaction a 1-O-alkyl-sn-glycero-3-phosphocholine + H2O = a 1-O-alkyl-sn-glycero-3-phosphate + choline + H(+). The enzyme catalyses 1-O-(9Z-octadecenyl)-sn-glycero-3-phosphocholine + H2O = 1-O-(9Z-octadecenyl)-sn-glycero-3-phosphate + choline + H(+). It catalyses the reaction 1-O-hexadecyl-sn-glycero-3-phosphocholine + H2O = 1-O-hexadecyl-sn-glycero-3-phosphate + choline + H(+). The catalysed reaction is a 1-O-(1Z-alkenyl)-sn-glycero-3-phosphocholine + H2O = a 1-O-(1Z-alkenyl)-sn-glycero-3-phosphate + choline + H(+). It carries out the reaction a 1-acyl-sn-glycero-3-phosphocholine + H2O = a 1-acyl-sn-glycero-3-phosphate + choline + H(+). The enzyme catalyses 1-dodecanoyl-sn-glycero-3-phosphocholine + H2O = 1-dodecanoyl-sn-glycerol 3-phosphate + choline + H(+). It catalyses the reaction 1-(9Z-octadecenoyl)-sn-glycero-3-phosphocholine + H2O = 1-(9Z-octadecenoyl)-sn-glycero-3-phosphate + choline + H(+). The catalysed reaction is 1-tetradecanoyl-sn-glycero-3-phosphocholine + H2O = 1-tetradecanoyl-sn-glycerol 3-phosphate + choline + H(+). It carries out the reaction 1-decanoyl-sn-glycero-3-phosphocholine + H2O = 1-decanoyl-sn-glycero-3-phosphate + choline + H(+). The enzyme catalyses 1-octadecanoyl-sn-glycero-3-phosphocholine + H2O = 1-octadecanoyl-sn-glycero-3-phosphate + choline + H(+). It catalyses the reaction 1-hexadecanoyl-sn-glycero-3-phosphocholine + H2O = 1-hexadecanoyl-sn-glycero-3-phosphate + choline + H(+). The catalysed reaction is 1-hexanoyl-sn-glycero-3-phosphocholine + H2O = 1-hexanoyl-sn-glycero-3-phosphate + choline + H(+). It carries out the reaction 1-(9Z,12Z)-octadecadienoyl-sn-glycero-3-phosphocholine + H2O = 1-(9Z,12Z)-octadecadienoyl-sn-glycero-3-phosphate + choline + H(+). The enzyme catalyses sphing-4-enine-phosphocholine + H2O = sphing-4-enine 1-phosphate + choline + H(+). It catalyses the reaction 1-(5Z,8Z,11Z,14Z-eicosatetraenoyl)-sn-glycero-3-phosphocholine + H2O = 1-(5Z,8Z,11Z,14Z-eicosatetraenoyl)-sn-glycero-3-phosphate + choline + H(+). The catalysed reaction is a 2-acyl-sn-glycero-3-phosphocholine + H2O = a 2-acyl-sn-glycerol 3-phosphate + choline + H(+). It carries out the reaction a 1,2-diacyl-sn-glycero-3-phosphocholine + H2O = a 1,2-diacyl-sn-glycero-3-phosphate + choline + H(+). The enzyme catalyses 1,2-dioctanoyl-sn-glycero-3-phosphocholine + H2O = 1,2-dioctanoyl-sn-glycero-3-phosphate + choline + H(+). It catalyses the reaction 1,2-didecanoyl-sn-glycero-3-phosphocholine + H2O = 1,2-didecanoyl-sn-glycero-3-phosphate + choline + H(+). The catalysed reaction is a 1-acyl-sn-glycero-3-phospho-L-serine + H2O = a 1-acyl-sn-glycero-3-phosphate + L-serine + H(+). It carries out the reaction 1-(9Z-octadecenoyl)-sn-glycero-3-phospho-L-serine + H2O = 1-(9Z-octadecenoyl)-sn-glycero-3-phosphate + L-serine + H(+). The enzyme catalyses a 2-acyl-sn-glycero-3-phospho-L-serine + H2O = a 2-acyl-sn-glycerol 3-phosphate + L-serine + H(+). Inhibited by lysophosphatidic acid (LPA) and sphingosine-1-phosphate (S1P). Inhibited by EDTA and EGTA. Functionally, secreted lysophospholipase D that hydrolyzes lysophospholipids to produce the signaling molecule lysophosphatidic acid (LPA) in extracellular fluids. Its major substrate is lysophosphatidylcholine. Can also act on sphingosylphosphorylcholine producing sphingosine-1-phosphate, a modulator of cell motility. Can hydrolyze, in vitro, bis-pNPP, to some extent pNP-TMP, and barely ATP. Involved in several motility-related processes such as angiogenesis and neurite outgrowth. Acts as an angiogenic factor by stimulating migration of smooth muscle cells and microtubule formation. Stimulates migration of melanoma cells, probably via a pertussis toxin-sensitive G protein. May have a role in induction of parturition. Possible involvement in cell proliferation and adipose tissue development. Required for LPA production in activated platelets, cleaves the sn-1 lysophospholipids to generate sn-1 lysophosphatidic acids containing predominantly 18:2 and 20:4 fatty acids. Shows a preference for the sn-1 to the sn-2 isomer of 1-O-alkyl-sn-glycero-3-phosphocholine (lyso-PAF). This chain is Autotaxin, found in Homo sapiens (Human).